The primary structure comprises 291 residues: UPF0173 metal-dependent hydrolase Rmet_5695 (291 aa).

This sequence belongs to the UPF0173 family.

This Cupriavidus metallidurans (strain ATCC 43123 / DSM 2839 / NBRC 102507 / CH34) (Ralstonia metallidurans) protein is UPF0173 metal-dependent hydrolase Rmet_5695.